We begin with the raw amino-acid sequence, 388 residues long: Succinate--CoA ligase [ADP-forming] subunit beta (388 aa).

In terms of domain architecture, ATP-grasp spans 9–244 (KQLFKEYGLP…PSQEDAREAH (236 aa)). ATP is bound by residues Lys46, 53-55 (GRG), Glu99, Thr102, and Glu107. Mg(2+) is bound by residues Asn199 and Asp213. Substrate-binding positions include Asn264 and 321-323 (GIV).

Belongs to the succinate/malate CoA ligase beta subunit family. As to quaternary structure, heterotetramer of two alpha and two beta subunits. It depends on Mg(2+) as a cofactor.

It carries out the reaction succinate + ATP + CoA = succinyl-CoA + ADP + phosphate. It catalyses the reaction GTP + succinate + CoA = succinyl-CoA + GDP + phosphate. It functions in the pathway carbohydrate metabolism; tricarboxylic acid cycle; succinate from succinyl-CoA (ligase route): step 1/1. Functionally, succinyl-CoA synthetase functions in the citric acid cycle (TCA), coupling the hydrolysis of succinyl-CoA to the synthesis of either ATP or GTP and thus represents the only step of substrate-level phosphorylation in the TCA. The beta subunit provides nucleotide specificity of the enzyme and binds the substrate succinate, while the binding sites for coenzyme A and phosphate are found in the alpha subunit. In Alteromonas mediterranea (strain DSM 17117 / CIP 110805 / LMG 28347 / Deep ecotype), this protein is Succinate--CoA ligase [ADP-forming] subunit beta.